The chain runs to 478 residues: MSHTSRVFFPPAFVEQMQQLLPDADEFQRFITSSQLPLRRSLRVNTLKISVDDFLTLVEPYQWALTPIPWCQEGFWISRDDADTLPLGSTAEHLAGLFYIQEASSMLPVSALFDGGDMPQRVMDMAAAPGSKTTQIAAHMGNRGAILANEYSASRVKVLHANLSRCGVSNTAMTHFDGRVFGPALPECFDAVLLDAPCSGEGVVRKDADALRNWSQSSTEEIAATQQALINSAFHALRPGGTLVYSTCTLNTRENQQVVNGLLEQYPDAVKVEPLDTLFMGAERATTAEGYLHVFPHIFDSEGFFVARLRKVASVPPMPQPGYKVGKPPFTPLNRVQQQEVIAAAASVGLRWDTELKLWQRDKELWLFPSEIEPLLGRVRFSRIGLKLAETFPKGFRWQHHAAVALADAASANAFELNSNEAEEWYRGRDIYPERDLPASELIICYQQRPIGIAKKVGSRIKNNYPRELVRDGKLFTL.

Residues 126–132 (AAAPGSK), Glu-150, Asp-177, and Asp-195 contribute to the S-adenosyl-L-methionine site. Cys-248 (nucleophile) is an active-site residue.

The protein belongs to the class I-like SAM-binding methyltransferase superfamily. RsmB/NOP family.

The protein localises to the cytoplasm. It catalyses the reaction cytidine(1407) in 16S rRNA + S-adenosyl-L-methionine = 5-methylcytidine(1407) in 16S rRNA + S-adenosyl-L-homocysteine + H(+). Functionally, specifically methylates the cytosine at position 1407 (m5C1407) of 16S rRNA. The protein is Ribosomal RNA small subunit methyltransferase F of Erwinia tasmaniensis (strain DSM 17950 / CFBP 7177 / CIP 109463 / NCPPB 4357 / Et1/99).